A 204-amino-acid polypeptide reads, in one-letter code: Twist-related protein 1 (204 aa).

Over residues Met-1–Ser-18 the composition is skewed to low complexity. The disordered stretch occupies residues Met-1–Glu-107. Positions Arg-34–Arg-43 are enriched in basic residues. 2 stretches are compositionally biased toward gly residues: residues Ala-46 to Glu-65 and Gly-80 to Ser-101. Positions Thr-110–Leu-161 constitute a bHLH domain. The tract at residues Gln-163 to Arg-193 is sufficient for transactivation activity.

In terms of assembly, efficient DNA binding requires dimerization with another bHLH protein. Homodimer or heterodimer with E proteins such as TCF3. ID1 binds preferentially to TCF3 but does not interact efficiently with TWIST1 so ID1 levels control the amount of TCF3 available to dimerize with TWIST and thus determine the type of dimer formed.

It localises to the nucleus. Functionally, acts as a transcriptional regulator. Inhibits myogenesis by sequestrating E proteins, inhibiting trans-activation by MEF2, and inhibiting DNA-binding by MYOD1 through physical interaction. This interaction probably involves the basic domains of both proteins. Also represses expression of pro-inflammatory cytokines such as TNFA and IL1B. Regulates cranial suture patterning and fusion. Activates transcription as a heterodimer with E proteins. Regulates gene expression differentially, depending on dimer composition. Homodimers induce expression of FGFR2 and POSTN while heterodimers repress FGFR2 and POSTN expression and induce THBS1 expression. Heterodimerization is also required for osteoblast differentiation. Represses the activity of the circadian transcriptional activator: NPAS2-BMAL1 heterodimer. This is Twist-related protein 1 (TWIST1) from Nomascus concolor (Black crested gibbon).